A 586-amino-acid polypeptide reads, in one-letter code: Mitochondrial tRNA methylthiotransferase CDK5RAP1 (586 aa).

The N-terminal 30 residues, 1–30, are a transit peptide targeting the mitochondrion; sequence MHPLQRVFRAQRLSAPLTSMCWVLLRTFRA. A disordered region spans residues 68-90; it reads ASVPQEKPSSPEVEDPPPYLSGD. Residues 97 to 217 form the MTTase N-terminal domain; sequence RKVYLETYGC…LPRLLAVVES (121 aa). 6 residues coordinate [4Fe-4S] cluster: C106, C142, C180, C255, C259, and C262. In terms of domain architecture, Radical SAM core spans 241–495; sequence SPSATSAFVS…ITVFREEASK (255 aa). The 76-residue stretch at 498-573 folds into the TRAM domain; the sequence is ATSVGCTQLV…SQTLKGHILC (76 aa).

This sequence belongs to the methylthiotransferase family. MiaB subfamily. Interacts with CDK5R1 (p35 form). CDK5RAP1, CDK5RAP2 and CDK5RAP3 show competitive binding to CDK5R1. Forms a complex with CDK5R1 and CDK5. [4Fe-4S] cluster is required as a cofactor. Expressed in brain.

It localises to the mitochondrion inner membrane. It catalyses the reaction N(6)-dimethylallyladenosine(37) in tRNA + (sulfur carrier)-SH + AH2 + 2 S-adenosyl-L-methionine = 2-methylsulfanyl-N(6)-dimethylallyladenosine(37) in tRNA + (sulfur carrier)-H + 5'-deoxyadenosine + L-methionine + A + S-adenosyl-L-homocysteine + 2 H(+). Functionally, methylthiotransferase that catalyzes the conversion of N6-(dimethylallyl)adenosine (i(6)A) to 2-methylthio-N6-(dimethylallyl)adenosine (ms(2)i(6)A) at position 37 (adjacent to the 3'-end of the anticodon) of four mitochondrial DNA-encoded tRNAs (Ser(UCN), Phe, Tyr and Trp). Essential for efficient and highly accurate protein translation by the ribosome. Specifically inhibits CDK5 activation by CDK5R1. Essential for efficient mitochondrial protein synthesis and respiratory chain. This is Mitochondrial tRNA methylthiotransferase CDK5RAP1 (Cdk5rap1) from Rattus norvegicus (Rat).